A 523-amino-acid chain; its full sequence is Acetyl-coenzyme A carboxylase carboxyl transferase subunit beta, chloroplastic (523 aa).

The region spanning 224 to 523 (FWVICENCHK…FVPSNQNSIK (300 aa)) is the CoA carboxyltransferase N-terminal domain. Residues C228, C231, C247, and C250 each contribute to the Zn(2+) site. Residues 228-250 (CENCHKFNYKRLFKSKMNICEEC) form a C4-type zinc finger.

It belongs to the AccD/PCCB family. Acetyl-CoA carboxylase is a heterohexamer composed of biotin carboxyl carrier protein, biotin carboxylase and 2 subunits each of ACCase subunit alpha and ACCase plastid-coded subunit beta (accD). Zn(2+) serves as cofactor.

It is found in the plastid. The protein localises to the chloroplast stroma. It catalyses the reaction N(6)-carboxybiotinyl-L-lysyl-[protein] + acetyl-CoA = N(6)-biotinyl-L-lysyl-[protein] + malonyl-CoA. The protein operates within lipid metabolism; malonyl-CoA biosynthesis; malonyl-CoA from acetyl-CoA: step 1/1. Its function is as follows. Component of the acetyl coenzyme A carboxylase (ACC) complex. Biotin carboxylase (BC) catalyzes the carboxylation of biotin on its carrier protein (BCCP) and then the CO(2) group is transferred by the transcarboxylase to acetyl-CoA to form malonyl-CoA. The sequence is that of Acetyl-coenzyme A carboxylase carboxyl transferase subunit beta, chloroplastic from Cucumis sativus (Cucumber).